Consider the following 282-residue polypeptide: Bifunctional protein FolD (282 aa).

Residues 166-168 (GAS) and isoleucine 232 contribute to the NADP(+) site.

It belongs to the tetrahydrofolate dehydrogenase/cyclohydrolase family. As to quaternary structure, homodimer.

It catalyses the reaction (6R)-5,10-methylene-5,6,7,8-tetrahydrofolate + NADP(+) = (6R)-5,10-methenyltetrahydrofolate + NADPH. It carries out the reaction (6R)-5,10-methenyltetrahydrofolate + H2O = (6R)-10-formyltetrahydrofolate + H(+). It functions in the pathway one-carbon metabolism; tetrahydrofolate interconversion. Catalyzes the oxidation of 5,10-methylenetetrahydrofolate to 5,10-methenyltetrahydrofolate and then the hydrolysis of 5,10-methenyltetrahydrofolate to 10-formyltetrahydrofolate. This chain is Bifunctional protein FolD, found in Histophilus somni (strain 129Pt) (Haemophilus somnus).